A 480-amino-acid chain; its full sequence is Ribosomal RNA small subunit methyltransferase F (480 aa).

Residues 126–132 (AAAPGSK), Glu150, Asp177, and Asp195 each bind S-adenosyl-L-methionine. Cys248 (nucleophile) is an active-site residue.

It belongs to the class I-like SAM-binding methyltransferase superfamily. RsmB/NOP family.

The protein localises to the cytoplasm. The enzyme catalyses cytidine(1407) in 16S rRNA + S-adenosyl-L-methionine = 5-methylcytidine(1407) in 16S rRNA + S-adenosyl-L-homocysteine + H(+). Functionally, specifically methylates the cytosine at position 1407 (m5C1407) of 16S rRNA. The polypeptide is Ribosomal RNA small subunit methyltransferase F (Cronobacter sakazakii (strain ATCC BAA-894) (Enterobacter sakazakii)).